Consider the following 271-residue polypeptide: Co-chaperone protein DjlA (271 aa).

The Periplasmic portion of the chain corresponds to 1–6 (MQYWGK). The helical transmembrane segment at 7-31 (IIGVAVALLMGGGFWGVVLGLLIGH) threads the bilayer. Over 32–271 (MFDKARSRKM…ELIKQQKGFK (240 aa)) the chain is Cytoplasmic. The region spanning 205–271 (DACNVLGVKP…ELIKQQKGFK (67 aa)) is the J domain.

In terms of assembly, homodimer.

It localises to the cell inner membrane. Its function is as follows. Regulatory DnaK co-chaperone. Direct interaction between DnaK and DjlA is needed for the induction of the wcaABCDE operon, involved in the synthesis of a colanic acid polysaccharide capsule, possibly through activation of the RcsB/RcsC phosphotransfer signaling pathway. The colanic acid capsule may help the bacterium survive conditions outside the host. This is Co-chaperone protein DjlA from Escherichia coli O157:H7.